Reading from the N-terminus, the 184-residue chain is MGLEEKLPSGFLLTTVEGLAGYARKGSLWPATFGLACCAIEMMATTSGRFDLARFGMEAFRASPRQADLLIVAGRVSQKMGPVLRQVYDQMAEPKWVLAMGVCASSGGMFNNYAVVQGVDHIVPVDIYLPGCPPRPEMLLNAIIELHRKIQEMPLGVNREEARAAAERAALASTPTIDMKGLLR.

4 residues coordinate [4Fe-4S] cluster: Cys-37, Cys-38, Cys-103, and Cys-132.

Belongs to the complex I 20 kDa subunit family. As to quaternary structure, NDH-1 is composed of 14 different subunits. Subunits NuoB, C, D, E, F, and G constitute the peripheral sector of the complex. The cofactor is [4Fe-4S] cluster.

The protein localises to the cell membrane. It catalyses the reaction a quinone + NADH + 5 H(+)(in) = a quinol + NAD(+) + 4 H(+)(out). Its function is as follows. NDH-1 shuttles electrons from NADH, via FMN and iron-sulfur (Fe-S) centers, to quinones in the respiratory chain. The immediate electron acceptor for the enzyme in this species is believed to be a menaquinone. Couples the redox reaction to proton translocation (for every two electrons transferred, four hydrogen ions are translocated across the cytoplasmic membrane), and thus conserves the redox energy in a proton gradient. This is NADH-quinone oxidoreductase subunit B from Rhodococcus erythropolis (strain PR4 / NBRC 100887).